The chain runs to 480 residues: NADH-quinone oxidoreductase subunit N (480 aa).

13 consecutive transmembrane segments (helical) span residues 5-25, 40-60, 69-89, 110-130, 162-182, 204-224, 237-257, 266-286, 296-316, 324-344, 368-388, 404-424, and 450-470; these read NFLC…LFLY, IAIV…FTMY, ISSQ…FLVF, VIML…NFVM, YILT…FLYG, LGFV…PFHL, VTAY…IFVL, LIWN…GNLF, FFAF…IAGT, IFYT…IASV, AFVM…AGFF, ILVF…LLIV, and MVIC…YEYI.

It belongs to the complex I subunit 2 family. NDH-1 is composed of 14 different subunits. Subunits NuoA, H, J, K, L, M, N constitute the membrane sector of the complex.

It localises to the cell inner membrane. It carries out the reaction a quinone + NADH + 5 H(+)(in) = a quinol + NAD(+) + 4 H(+)(out). Its function is as follows. NDH-1 shuttles electrons from NADH, via FMN and iron-sulfur (Fe-S) centers, to quinones in the respiratory chain. The immediate electron acceptor for the enzyme in this species is believed to be a menaquinone. Couples the redox reaction to proton translocation (for every two electrons transferred, four hydrogen ions are translocated across the cytoplasmic membrane), and thus conserves the redox energy in a proton gradient. The polypeptide is NADH-quinone oxidoreductase subunit N (Azobacteroides pseudotrichonymphae genomovar. CFP2).